A 419-amino-acid chain; its full sequence is Glutamyl-tRNA reductase (419 aa).

Substrate contacts are provided by residues 50-53 (TCNR), Ser-108, 113-115 (ETQ), and Gln-119. The Nucleophile role is filled by Cys-51. NADP(+) is bound at residue 188–193 (GAGEMI).

This sequence belongs to the glutamyl-tRNA reductase family. As to quaternary structure, homodimer.

It carries out the reaction (S)-4-amino-5-oxopentanoate + tRNA(Glu) + NADP(+) = L-glutamyl-tRNA(Glu) + NADPH + H(+). It participates in porphyrin-containing compound metabolism; protoporphyrin-IX biosynthesis; 5-aminolevulinate from L-glutamyl-tRNA(Glu): step 1/2. In terms of biological role, catalyzes the NADPH-dependent reduction of glutamyl-tRNA(Glu) to glutamate 1-semialdehyde (GSA). This is Glutamyl-tRNA reductase from Albidiferax ferrireducens (strain ATCC BAA-621 / DSM 15236 / T118) (Rhodoferax ferrireducens).